The following is a 231-amino-acid chain: MAKLTKRQKAIAEKIEAGKAYNFEEAATLLASLPTAKFVESYDIAVNLGVDPRKSDQVVRSATVLPHGTGKTVRVAVFTQGPAAEAALAAGADRVGMDDLAAEMKGGDLNYDVVIASPDAMRVVGQLGQVLGPRGLMPNPKVGTVTPDVATAVKNAKAGQVRYRTDKNGIIHTSVGKVGFEAGKLKENVEALIADLKRIKPASSKGIYVKRVTLSTTMGPGLIIDQSSLNV.

The protein belongs to the universal ribosomal protein uL1 family. Part of the 50S ribosomal subunit.

Functionally, binds directly to 23S rRNA. The L1 stalk is quite mobile in the ribosome, and is involved in E site tRNA release. Its function is as follows. Protein L1 is also a translational repressor protein, it controls the translation of the L11 operon by binding to its mRNA. In Pseudomonas entomophila (strain L48), this protein is Large ribosomal subunit protein uL1.